The primary structure comprises 370 residues: MFIKNDHAGDRKRLEDWRIKGYDPLTPPDLLQHEFPISAKGEENIIKARDSVCDILNGKDDRLVIVIGPCSLHDPKAAYDYADRLAKISEKLSKDLLIIMRAYLEKPRTTVGWKGLINDPDMNNSFQINKGLRISREMFIKLVEKLPIAGEMLDTISPQFLSDCFSLGAIGARTTESQLHRELASGLSFPIGFKNGTDGGLQVAIDAMRAAAHEHYFLSVTKPGVTAIVGTEGNKDTFLILRGGKNGTNFDKESVQNTKKQLEKAGLTDDSQKRIMIDCSHGNSNKDFKNQPKVAKCIYDQLTEGENSLCGVMIESNINEGRQDIPKEGGREGLKYGCSVTDACIGWESTEQVLELLAEGVRNRRKALKK.

Belongs to the class-I DAHP synthase family.

The enzyme catalyses D-erythrose 4-phosphate + phosphoenolpyruvate + H2O = 7-phospho-2-dehydro-3-deoxy-D-arabino-heptonate + phosphate. The protein operates within metabolic intermediate biosynthesis; chorismate biosynthesis; chorismate from D-erythrose 4-phosphate and phosphoenolpyruvate: step 1/7. With respect to regulation, inhibited by phenyalanine. In terms of biological role, stereospecific condensation of phosphoenolpyruvate (PEP) and D-erythrose-4-phosphate (E4P) giving rise to 3-deoxy-D-arabino-heptulosonate-7-phosphate (DAHP). This is Phospho-2-dehydro-3-deoxyheptonate aldolase, phenylalanine-inhibited (ARO3) from Saccharomyces cerevisiae (strain ATCC 204508 / S288c) (Baker's yeast).